A 25-amino-acid polypeptide reads, in one-letter code: SKTPIRVAVTGAAGNIGYHLLFRIA.

11 to 17 is an NAD(+) binding site; sequence GAAGNIG.

Belongs to the LDH/MDH superfamily. MDH type 2 family.

It carries out the reaction (S)-malate + NAD(+) = oxaloacetate + NADH + H(+). In terms of biological role, catalyzes the reversible oxidation of malate to oxaloacetate. This is Malate dehydrogenase (mdh) from Phenylobacterium immobile.